Here is a 223-residue protein sequence, read N- to C-terminus: UPF0441 protein YgiB (223 aa).

The segment covering 178 to 195 (TVPKTAMAPKPATTTTVT) has biased composition (low complexity). The disordered stretch occupies residues 178 to 223 (TVPKTAMAPKPATTTTVTRGGFGESVAKQSTMQRSATGTSSRSMGG). Over residues 204-223 (AKQSTMQRSATGTSSRSMGG) the composition is skewed to polar residues.

The protein belongs to the UPF0441 family.

This Shigella boydii serotype 18 (strain CDC 3083-94 / BS512) protein is UPF0441 protein YgiB.